We begin with the raw amino-acid sequence, 342 residues long: Serpentine receptor class gamma-69 (342 aa).

A run of 7 helical transmembrane segments spans residues methionine 11–valine 31, serine 51–isoleucine 71, proline 106–alanine 126, leucine 140–lysine 160, isoleucine 191–leucine 211, alanine 222–phenylalanine 242, and phenylalanine 269–valine 289.

The protein belongs to the nematode receptor-like protein srg family.

Its subcellular location is the membrane. In Caenorhabditis elegans, this protein is Serpentine receptor class gamma-69 (srg-69).